The following is a 122-amino-acid chain: Large ribosomal subunit protein uL24 (122 aa).

The protein belongs to the universal ribosomal protein uL24 family. Part of the 50S ribosomal subunit.

Its function is as follows. One of two assembly initiator proteins, it binds directly to the 5'-end of the 23S rRNA, where it nucleates assembly of the 50S subunit. Functionally, one of the proteins that surrounds the polypeptide exit tunnel on the outside of the subunit. The sequence is that of Large ribosomal subunit protein uL24 from Renibacterium salmoninarum (strain ATCC 33209 / DSM 20767 / JCM 11484 / NBRC 15589 / NCIMB 2235).